The primary structure comprises 318 residues: O-glucosyltransferase LpsA (318 aa).

Belongs to the glycosyltransferase 90 family.

It functions in the pathway protein modification; protein glycosylation. Functionally, involved in lipopolysaccharide core biosynthesis. The sequence is that of O-glucosyltransferase LpsA (lpsA) from Dichelobacter nodosus (Bacteroides nodosus).